Reading from the N-terminus, the 112-residue chain is Ig kappa chain V-II region MOPC 167 (112 aa).

The framework-1 stretch occupies residues 1 to 23 (DIVITQDELSNPVTSGESVSISC). The cysteines at positions 23 and 93 are disulfide-linked. A complementarity-determining-1 region spans residues 24–39 (RSSKSLLYKDGKTYLN). The framework-2 stretch occupies residues 40-54 (WFLQRPGQSPQLLIS). The segment at 55-61 (LMSTRAS) is complementarity-determining-2. Residues 62 to 93 (GVSDRFSGSGSRTDFTLEISRVKAEDVGVYYC) are framework-3. The interval 94 to 102 (QQLVEYPLT) is complementarity-determining-3. The tract at residues 103 to 112 (FGAGTKLELK) is framework-4.

This is Ig kappa chain V-II region MOPC 167 from Mus musculus (Mouse).